A 423-amino-acid polypeptide reads, in one-letter code: uncharacterized protein (423 aa).

Mg(2+)-binding residues include lysine 181, aspartate 183, and glutamate 184. The residue at position 181 (lysine 181) is an N6-carboxylysine.

The protein belongs to the RuBisCO large chain family. Type IV subfamily. Mg(2+) serves as cofactor.

Its function is as follows. May be involved in sulfur metabolism and oxidative stress response. Does not show RuBisCO activity. This is an uncharacterized protein from Bordetella bronchiseptica (strain ATCC BAA-588 / NCTC 13252 / RB50) (Alcaligenes bronchisepticus).